The primary structure comprises 150 residues: DNA-directed RNA polymerases I, II, and III subunit RPABC3 (150 aa).

Alanine 2 carries the post-translational modification N-acetylalanine.

The protein belongs to the eukaryotic RPB8 RNA polymerase subunit family. Component of the RNA polymerase I (Pol I), RNA polymerase II (Pol II) and RNA polymerase III (Pol III) complexes consisting of at least 13, 12 and 17 subunits, respectively. Pol I complex consists of a ten-subunit catalytic core composed of POLR1A/RPA1, POLR1B/RPA2, POLR1C/RPAC1, POLR1D/RPAC2, POLR1H/RPA12, POLR2E/RPABC1, POLR2F/RPABC2, POLR2H/RPABC3, POLR2K/RPABC4 and POLR2L/RPABC5; a mobile stalk subunit POLR1F/RPA43 protruding from the core and additional subunits homologous to general transcription factors POLR1E/RPA49 and POLR1G/RPA34. Part of Pol I pre-initiation complex (PIC), in which Pol I core assembles with RRN3 and promoter-bound UTBF and SL1/TIF-IB complex. Pol II complex contains a ten-subunit catalytic core composed of POLR2A/RPB1, POLR2B/RPB2, POLR2C/RPB3, POLR2I/RPB9, POLR2J/RPB11, POLR2E/RPABC1, POLR2F/RPABC2, POLR2H/RPABC3, POLR2K/RPABC4 and POLR2L/RPABC5 and a mobile stalk composed of two subunits POLR2D/RPB4 and POLR2G/RPB7. Part of Pol II(G) complex, in which Pol II core associates with an additional subunit POLR2M; unlike conventional Pol II, Pol II(G) functions as a transcriptional repressor. Part of Pol II pre-initiation complex (PIC), in which Pol II core assembles with Mediator, general transcription factors and other specific initiation factors including GTF2E1, GTF2E2, GTF2F1, GTF2F2, TCEA1, ERCC2, ERCC3, GTF2H2, GTF2H3, GTF2H4, GTF2H5, GTF2A1, GTF2A2, GTF2B and TBP; this large multi-subunit PIC complex mediates DNA unwinding and targets Pol II core to the transcription start site where the first phosphodiester bond forms. Directly interacts with POLR2A. Pol III complex consists of a ten-subunit catalytic core composed of POLR3A/RPC1, POLR3B/RPC2, POLR1C/RPAC1, POLR1D/RPAC2, POLR3K/RPC10, POLR2E/RPABC1, POLR2F/RPABC2, POLR2H/RPABC3, POLR2K/RPABC4 and POLR2L/RPABC5; a mobile stalk composed of two subunits POLR3H/RPC8 and CRCP/RPC9, protruding from the core and functioning primarily in transcription initiation; and additional subunits homologous to general transcription factors of the RNA polymerase II machinery, POLR3C/RPC3-POLR3F/RPC6-POLR3G/RPC7 heterotrimer required for transcription initiation and POLR3D/RPC4-POLR3E/RPC5 heterodimer involved in both transcription initiation and termination.

The protein localises to the nucleus. It localises to the nucleolus. Functionally, DNA-dependent RNA polymerase catalyzes the transcription of DNA into RNA using the four ribonucleoside triphosphates as substrates. Common component of RNA polymerases I, II and III which synthesize ribosomal RNA precursors, mRNA precursors and many functional non-coding RNAs, and small RNAs, such as 5S rRNA and tRNAs, respectively. In Bos taurus (Bovine), this protein is DNA-directed RNA polymerases I, II, and III subunit RPABC3 (POLR2H).